Here is a 218-residue protein sequence, read N- to C-terminus: uncharacterized protein (218 aa).

In terms of domain architecture, ACT spans 4–83 (GISIEAENKV…IHSSLKKIYG (80 aa)).

This is an uncharacterized protein from Methanocaldococcus jannaschii (strain ATCC 43067 / DSM 2661 / JAL-1 / JCM 10045 / NBRC 100440) (Methanococcus jannaschii).